We begin with the raw amino-acid sequence, 380 residues long: Cytochrome b (380 aa).

The next 4 membrane-spanning stretches (helical) occupy residues 34–54 (FGSLLAMCLATQILTGLLLAM), 78–99 (WLIRNLHANGASFFFICIFLHI), 114–134 (WNTGVILLLTLMATAFVGYVL), and 179–199 (FFALHFLLPFVIAGITIIHLI). Positions 84 and 98 each coordinate heme b. Heme b is bound by residues His-183 and His-197. Residue His-202 coordinates a ubiquinone. 4 consecutive transmembrane segments (helical) span residues 227–247 (LKDILGLTLMLTPLLTLALFS), 289–309 (LGGVLALAASVLILLLIPFLH), 321–341 (LSQTLFWLLVANLLVLTWVGS), and 348–368 (FIIIGQMASFSYFTILLILFP).

It belongs to the cytochrome b family. As to quaternary structure, the cytochrome bc1 complex contains 11 subunits: 3 respiratory subunits (MT-CYB, CYC1 and UQCRFS1), 2 core proteins (UQCRC1 and UQCRC2) and 6 low-molecular weight proteins (UQCRH/QCR6, UQCRB/QCR7, UQCRQ/QCR8, UQCR10/QCR9, UQCR11/QCR10 and a cleavage product of UQCRFS1). This cytochrome bc1 complex then forms a dimer. Heme b is required as a cofactor.

The protein resides in the mitochondrion inner membrane. In terms of biological role, component of the ubiquinol-cytochrome c reductase complex (complex III or cytochrome b-c1 complex) that is part of the mitochondrial respiratory chain. The b-c1 complex mediates electron transfer from ubiquinol to cytochrome c. Contributes to the generation of a proton gradient across the mitochondrial membrane that is then used for ATP synthesis. The chain is Cytochrome b (MT-CYB) from Tragopan temminckii (Temminck's tragopan).